The primary structure comprises 238 residues: Probable transglycosylase SceD 1 (238 aa).

The N-terminal stretch at 1-27 is a signal peptide; that stretch reads MKKTVVASTLAVGLGVTGFAAGNSADA. Positions 87–97 are enriched in polar residues; that stretch reads TNAPAQETAEQ. The segment at 87-161 is disordered; it reads TNAPAQETAE…SEASEGSSVN (75 aa). Low complexity predominate over residues 102–156; that stretch reads EQPQQTEQASTEQPAQEAAPQTEETQQPQQEATTQTTSSSNESTSNESSSSEASE.

It belongs to the transglycosylase family. SceD subfamily.

The protein resides in the secreted. Is able to cleave peptidoglycan and affects clumping and separation of bacterial cells. The polypeptide is Probable transglycosylase SceD 1 (sceD1) (Staphylococcus saprophyticus subsp. saprophyticus (strain ATCC 15305 / DSM 20229 / NCIMB 8711 / NCTC 7292 / S-41)).